We begin with the raw amino-acid sequence, 506 residues long: Putative basic amino acid antiporter YfcC (506 aa).

The next 13 membrane-spanning stretches (helical) occupy residues 19–39, 107–127, 148–168, 171–191, 208–228, 231–251, 287–307, 310–330, 352–372, 398–418, 419–439, 442–462, and 485–505; these read LVIIFFVAILTSLATWVVPVG, GTAVGIIMFMLVIGGAFGIVM, ILFIPALFILFSLGGAVFGMG, AVAFAIIIAPLMVRLGYDSIT, WMNPFCVVVAQGIAGVPVLSG, LRIVVWVIATLIGLIFTMVYA, WLVLIVLTAVMVWVIWGVIVN, FIPEIASQFFTMGLVIGIIGV, MMIAPALLVGFAKGILLLVGN, AVAAWFMLLFQAVFNFFVTSG, SGQAALTMPLLAPLGDLVGVN, VTVLAFQFGDGFSHIIYPTSA, and LLGLLFIMSSVVVIGAQLMGY.

The protein to H.influenzae HI_0594. To B.subtilis YcgA.

Its subcellular location is the cell inner membrane. Functionally, metabolomic profiling of different yfcC over-expression and deletion strains suggests that it may affect the glyoxylate shunt. In Escherichia coli (strain K12), this protein is Putative basic amino acid antiporter YfcC (yfcC).